A 344-amino-acid polypeptide reads, in one-letter code: Phenylalanine--tRNA ligase alpha subunit (344 aa).

Residue Glu256 coordinates Mg(2+).

Belongs to the class-II aminoacyl-tRNA synthetase family. Phe-tRNA synthetase alpha subunit type 1 subfamily. Tetramer of two alpha and two beta subunits. The cofactor is Mg(2+).

The protein localises to the cytoplasm. It carries out the reaction tRNA(Phe) + L-phenylalanine + ATP = L-phenylalanyl-tRNA(Phe) + AMP + diphosphate + H(+). The protein is Phenylalanine--tRNA ligase alpha subunit (pheS) of Halalkalibacterium halodurans (strain ATCC BAA-125 / DSM 18197 / FERM 7344 / JCM 9153 / C-125) (Bacillus halodurans).